The primary structure comprises 257 residues: Taurine import ATP-binding protein TauB (257 aa).

One can recognise an ABC transporter domain in the interval 6–233 (LDKISIHYDG…RYAAGEPIRA (228 aa)). 38–45 (GRSGCGKT) contributes to the ATP binding site.

It belongs to the ABC transporter superfamily. Taurine importer (TC 3.A.1.17.1) family. As to quaternary structure, the complex is composed of two ATP-binding proteins (TauB), two transmembrane proteins (TauC) and a solute-binding protein (TauA).

The protein localises to the cell inner membrane. It carries out the reaction taurine(out) + ATP + H2O = taurine(in) + ADP + phosphate + H(+). Part of the ABC transporter complex TauABC involved in taurine import. Responsible for energy coupling to the transport system. The chain is Taurine import ATP-binding protein TauB from Mesorhizobium japonicum (strain LMG 29417 / CECT 9101 / MAFF 303099) (Mesorhizobium loti (strain MAFF 303099)).